A 139-amino-acid chain; its full sequence is Small ribosomal subunit protein bS16 (139 aa).

A disordered region spans residues 84-139; sequence KGEPAPAPLLQPAEKAARPSFEAIGGEDEGKGEAITQKKKADKRDEAAAESSASEA.

The protein belongs to the bacterial ribosomal protein bS16 family.

This is Small ribosomal subunit protein bS16 from Streptomyces lividans.